A 101-amino-acid polypeptide reads, in one-letter code: Phosphoribosyl-AMP cyclohydrolase (101 aa).

Asp-71 contributes to the Mg(2+) binding site. Zn(2+) is bound at residue Cys-72. Positions 73 and 75 each coordinate Mg(2+). Cys-88 and Cys-95 together coordinate Zn(2+).

Belongs to the PRA-CH family. In terms of assembly, homodimer. The cofactor is Mg(2+). Requires Zn(2+) as cofactor.

It localises to the cytoplasm. The enzyme catalyses 1-(5-phospho-beta-D-ribosyl)-5'-AMP + H2O = 1-(5-phospho-beta-D-ribosyl)-5-[(5-phospho-beta-D-ribosylamino)methylideneamino]imidazole-4-carboxamide. The protein operates within amino-acid biosynthesis; L-histidine biosynthesis; L-histidine from 5-phospho-alpha-D-ribose 1-diphosphate: step 3/9. In terms of biological role, catalyzes the hydrolysis of the adenine ring of phosphoribosyl-AMP. In Bacillus cereus (strain B4264), this protein is Phosphoribosyl-AMP cyclohydrolase.